A 733-amino-acid chain; its full sequence is Phosphoribosylformylglycinamidine synthase subunit PurL (733 aa).

His-44 is a catalytic residue. Positions 47 and 86 each coordinate ATP. Glu-88 contacts Mg(2+). Residues 89–92 (SHNH) and Arg-111 each bind substrate. His-90 functions as the Proton acceptor in the catalytic mechanism. Asp-112 is a Mg(2+) binding site. Residue Gln-233 coordinates substrate. Asp-261 provides a ligand contact to Mg(2+). 305-307 (ESQ) lines the substrate pocket. ATP contacts are provided by Asp-492 and Gly-529. Residue Asn-530 coordinates Mg(2+). Ser-532 provides a ligand contact to substrate.

This sequence belongs to the FGAMS family. As to quaternary structure, monomer. Part of the FGAM synthase complex composed of 1 PurL, 1 PurQ and 2 PurS subunits.

The protein localises to the cytoplasm. The enzyme catalyses N(2)-formyl-N(1)-(5-phospho-beta-D-ribosyl)glycinamide + L-glutamine + ATP + H2O = 2-formamido-N(1)-(5-O-phospho-beta-D-ribosyl)acetamidine + L-glutamate + ADP + phosphate + H(+). Its pathway is purine metabolism; IMP biosynthesis via de novo pathway; 5-amino-1-(5-phospho-D-ribosyl)imidazole from N(2)-formyl-N(1)-(5-phospho-D-ribosyl)glycinamide: step 1/2. Its function is as follows. Part of the phosphoribosylformylglycinamidine synthase complex involved in the purines biosynthetic pathway. Catalyzes the ATP-dependent conversion of formylglycinamide ribonucleotide (FGAR) and glutamine to yield formylglycinamidine ribonucleotide (FGAM) and glutamate. The FGAM synthase complex is composed of three subunits. PurQ produces an ammonia molecule by converting glutamine to glutamate. PurL transfers the ammonia molecule to FGAR to form FGAM in an ATP-dependent manner. PurS interacts with PurQ and PurL and is thought to assist in the transfer of the ammonia molecule from PurQ to PurL. The polypeptide is Phosphoribosylformylglycinamidine synthase subunit PurL (Thermomicrobium roseum (strain ATCC 27502 / DSM 5159 / P-2)).